The following is a 235-amino-acid chain: Phosphoribosylaminoimidazole-succinocarboxamide synthase (235 aa).

Belongs to the SAICAR synthetase family.

The catalysed reaction is 5-amino-1-(5-phospho-D-ribosyl)imidazole-4-carboxylate + L-aspartate + ATP = (2S)-2-[5-amino-1-(5-phospho-beta-D-ribosyl)imidazole-4-carboxamido]succinate + ADP + phosphate + 2 H(+). The protein operates within purine metabolism; IMP biosynthesis via de novo pathway; 5-amino-1-(5-phospho-D-ribosyl)imidazole-4-carboxamide from 5-amino-1-(5-phospho-D-ribosyl)imidazole-4-carboxylate: step 1/2. The protein is Phosphoribosylaminoimidazole-succinocarboxamide synthase of Chlorobium chlorochromatii (strain CaD3).